We begin with the raw amino-acid sequence, 194 residues long: Peptidyl-tRNA hydrolase (194 aa).

Residue Tyr-21 participates in tRNA binding. His-26 serves as the catalytic Proton acceptor. Positions 72, 74, and 120 each coordinate tRNA.

It belongs to the PTH family. As to quaternary structure, monomer.

The protein localises to the cytoplasm. The enzyme catalyses an N-acyl-L-alpha-aminoacyl-tRNA + H2O = an N-acyl-L-amino acid + a tRNA + H(+). Its function is as follows. Hydrolyzes ribosome-free peptidyl-tRNAs (with 1 or more amino acids incorporated), which drop off the ribosome during protein synthesis, or as a result of ribosome stalling. In terms of biological role, catalyzes the release of premature peptidyl moieties from peptidyl-tRNA molecules trapped in stalled 50S ribosomal subunits, and thus maintains levels of free tRNAs and 50S ribosomes. This is Peptidyl-tRNA hydrolase from Halorhodospira halophila (strain DSM 244 / SL1) (Ectothiorhodospira halophila (strain DSM 244 / SL1)).